The following is a 331-amino-acid chain: Ferredoxin--NADP reductase 2 (331 aa).

FAD contacts are provided by E37, Q45, Y50, V90, F124, D286, and T327.

Belongs to the ferredoxin--NADP reductase type 2 family. As to quaternary structure, homodimer. The cofactor is FAD.

The enzyme catalyses 2 reduced [2Fe-2S]-[ferredoxin] + NADP(+) + H(+) = 2 oxidized [2Fe-2S]-[ferredoxin] + NADPH. The protein is Ferredoxin--NADP reductase 2 of Listeria innocua serovar 6a (strain ATCC BAA-680 / CLIP 11262).